Consider the following 378-residue polypeptide: Cysteine endopeptidase RepA (378 aa).

The signal sequence occupies residues 1–24; it reads MLRCFLVAAAAVALAAAAAAPARA. Residues 25-141 constitute a propeptide, activation peptide; the sequence is IPFTESDLSS…SFRYGGDDED (117 aa). 3 cysteine pairs are disulfide-bonded: C164/C206, C198/C239, and C297/C350. The active site involves C167. Catalysis depends on residues H303 and N324.

It belongs to the peptidase C1 family.

It is found in the protein storage vacuole. Its function is as follows. Cysteine endopeptidase that digests in vitro both the acidic and basic subunits of glutelin, the major seed storage protein of rice. This chain is Cysteine endopeptidase RepA, found in Oryza sativa subsp. japonica (Rice).